Here is a 183-residue protein sequence, read N- to C-terminus: ATP-dependent protease subunit HslV (183 aa).

The active site involves threonine 2. Positions 157, 160, and 163 each coordinate Na(+).

The protein belongs to the peptidase T1B family. HslV subfamily. A double ring-shaped homohexamer of HslV is capped on each side by a ring-shaped HslU homohexamer. The assembly of the HslU/HslV complex is dependent on binding of ATP.

It is found in the cytoplasm. The enzyme catalyses ATP-dependent cleavage of peptide bonds with broad specificity.. Allosterically activated by HslU binding. In terms of biological role, protease subunit of a proteasome-like degradation complex believed to be a general protein degrading machinery. In Marinomonas sp. (strain MWYL1), this protein is ATP-dependent protease subunit HslV.